A 615-amino-acid chain; its full sequence is Delta-like protein B (615 aa).

The first 20 residues, Met1 to Ser20, serve as a signal peptide directing secretion. At Ser21–Ala522 the chain is on the extracellular side. Residues Val159–Cys203 enclose the DSL domain. Intrachain disulfides connect Cys161–Cys170, Cys174–Cys186, Cys194–Cys203, Cys208–Cys219, Cys212–Cys225, Cys227–Cys236, Cys245–Cys250, Cys258–Cys267, Cys274–Cys286, Cys280–Cys296, Cys298–Cys307, Cys314–Cys325, Cys319–Cys334, Cys336–Cys345, Cys352–Cys363, Cys357–Cys373, Cys375–Cys384, Cys391–Cys402, Cys396–Cys411, Cys413–Cys422, Cys429–Cys440, Cys434–Cys449, Cys451–Cys460, Cys467–Cys478, Cys472–Cys487, and Cys489–Cys498. 3 consecutive EGF-like domains span residues Ser204 to Ser237, His241 to Asn268, and Asp270 to Glu308. In terms of domain architecture, EGF-like 4; calcium-binding spans Glu310 to Glu346. EGF-like domains follow at residues Ile348–Glu385 and Arg387–Glu423. The EGF-like 7; calcium-binding domain occupies Asn425–Ser461. An N-linked (GlcNAc...) asparagine glycan is attached at Asn459. Residues Arg463–Glu499 enclose the EGF-like 8 domain. The chain crosses the membrane as a helical span at residues Val523–Leu543. At Arg544–Arg615 the chain is on the cytoplasmic side.

Post-translationally, ubiquitinated by mib, leading to its endocytosis and subsequent degradation.

Its subcellular location is the membrane. Its function is as follows. Acts as a ligand for Notch receptors and is involved in primary neurogenesis. Can activate Notch receptors, thereby playing a key role in lateral inhibition, a process that prevents the immediate neighbors of each nascent neural cell from simultaneously embarking on neural differentiation. This chain is Delta-like protein B (dlb), found in Danio rerio (Zebrafish).